The chain runs to 130 residues: Small ribosomal subunit protein uS8 (130 aa).

This sequence belongs to the universal ribosomal protein uS8 family.

The protein resides in the cytoplasm. The sequence is that of Small ribosomal subunit protein uS8 (RPS15A) from Daucus carota (Wild carrot).